A 203-amino-acid chain; its full sequence is Protein GrpE 2 (203 aa).

Over residues 1-12 (MPTRPQEPDRAA) the composition is skewed to basic and acidic residues. Residues 1–64 (MPTRPQEPDR…APAEDEYTTA (64 aa)) are disordered. Low complexity predominate over residues 45 to 56 (GEPGPDAAGPAP).

The protein belongs to the GrpE family. As to quaternary structure, homodimer.

The protein localises to the cytoplasm. Functionally, participates actively in the response to hyperosmotic and heat shock by preventing the aggregation of stress-denatured proteins, in association with DnaK and GrpE. It is the nucleotide exchange factor for DnaK and may function as a thermosensor. Unfolded proteins bind initially to DnaJ; upon interaction with the DnaJ-bound protein, DnaK hydrolyzes its bound ATP, resulting in the formation of a stable complex. GrpE releases ADP from DnaK; ATP binding to DnaK triggers the release of the substrate protein, thus completing the reaction cycle. Several rounds of ATP-dependent interactions between DnaJ, DnaK and GrpE are required for fully efficient folding. The protein is Protein GrpE 2 of Streptomyces avermitilis (strain ATCC 31267 / DSM 46492 / JCM 5070 / NBRC 14893 / NCIMB 12804 / NRRL 8165 / MA-4680).